The following is a 483-amino-acid chain: M protein, serotype 6 (483 aa).

Residues 1-42 (MAKNNTNRHYSLRKLKKGTASVAVALSVIGAGLVVNTNEVSA) form the signal peptide. Residues 54 to 171 (DKARELLNKY…IGTLKKTLDE (118 aa)) adopt a coiled-coil conformation. A run of 8 repeats spans residues 69–75 (MLQANND), 76–82 (KLTTENN), 83–89 (NLTDQNK), 90–96 (NLTTENK), 97–103 (NLTDQNK), 104–110 (NLTTENK), 111–117 (NLTDQNK), and 118–124 (NLTTENK). Residues 69-138 (MLQANNDKLT…EENRLTTENK (70 aa)) form a 10 X 7 AA approximate tandem repeats of [KMNR]-L-[TQ]-[TDA]-[ENQ]-N-[NDK] region. Polar residues predominate over residues 74-87 (NDKLTTENNNLTDQ). The disordered stretch occupies residues 74–157 (NDKLTTENNN…EEEAANKERE (84 aa)). Residues 88 to 113 (NKNLTTENKNLTDQNKNLTTENKNLT) show a composition bias toward low complexity. 2 stretches are compositionally biased toward basic and acidic residues: residues 122–135 (ENKE…RLTT) and 143–157 (KLSE…KERE). A 9-1; approximate repeat occupies 125-131 (ELKAEEN). 5 tandem repeats follow at residues 132 to 138 (RLTTENK), 157 to 181 (ENKE…AKEQ), 182 to 206 (ESKE…AKEQ), 207 to 231 (ESKE…AKEQ), and 232 to 256 (ESKE…AREQ). Residues 157-269 (ENKEAIGTLK…QDIGALKQEL (113 aa)) form a 4.5 X 25 AA tandem repeats of E-[NS]-K-E-[TA]-I-G-T-L-K-K-[TI]-L-D-E-T-V-K-D-K-I-A-[KR]-E-Q region. Disordered stretches follow at residues 255-298 (EQKS…EAKK) and 314-345 (VKEE…VEKA). One copy of the 5-2; truncated repeat lies at 257–269 (KSKQDIGALKQEL). Composition is skewed to basic and acidic residues over residues 268–298 (ELAK…EAKK) and 328–345 (LRRD…VEKA). 2 C repeats span residues 270 to 304 (AKKD…EKDL) and 312 to 346 (DKVK…EKAL). Positions 279–347 (SEASRKGLRR…AKKQVEKALE (69 aa)) are binding to CD46. The interval 279-347 (SEASRKGLRR…AKKQVEKALE (69 aa)) is two directly repeated 27 amino acid blocks separated by 15 amino acids. Residues 280–408 (EASRKGLRRD…LAKLRAGKAS (129 aa)) are a coiled coil. The interval 348–411 (EANSKLAALE…LRAGKASDSQ (64 aa)) is hydrophilic. D repeat units lie at residues 379 to 384 (AKLEAE), 385 to 390 (AKALKE), 393 to 398 (AKQAEE), and 400 to 405 (AKLRAG). The tract at residues 400–455 (AKLRAGKASDSQTPDAKPGNKVVPGKGQAPQAGTKPNQNKAPMKETKRQLPSTGET) is disordered. Residues 449–453 (LPSTG) carry the LPXTG sorting signal motif. The residue at position 452 (threonine 452) is a Pentaglycyl murein peptidoglycan amidated threonine. Residues 453-483 (GETANPFFTAAALTVMATAGVAAVVKRKEEN) constitute a propeptide, removed by sortase.

Belongs to the M protein family.

The protein resides in the secreted. Its subcellular location is the cell wall. Its function is as follows. Mediates the attachment of S.pyogenes to skin epithelial cells through the binding of the human membrane cofactor protein CD46. Also binds to the factor H and factor H-like protein 1. These interactions could contribute to the fact that the M6 protein protects the bacterium from the phagocytosis by regulating the complement activation on the bacterial surface. The protein is M protein, serotype 6 (emm6) of Streptococcus pyogenes.